We begin with the raw amino-acid sequence, 277 residues long: S-formylglutathione hydrolase FrmB (277 aa).

Active-site charge relay system residues include serine 145, aspartate 221, and histidine 254.

This sequence belongs to the esterase D family.

The catalysed reaction is S-formylglutathione + H2O = formate + glutathione + H(+). Its function is as follows. Serine hydrolase involved in the detoxification of formaldehyde. Hydrolyzes S-formylglutathione to glutathione and formate. This Escherichia coli (strain ATCC 8739 / DSM 1576 / NBRC 3972 / NCIMB 8545 / WDCM 00012 / Crooks) protein is S-formylglutathione hydrolase FrmB (frmB).